Consider the following 126-residue polypeptide: Small ribosomal subunit protein uS12 (126 aa).

Asp-89 carries the post-translational modification 3-methylthioaspartic acid.

It belongs to the universal ribosomal protein uS12 family. Part of the 30S ribosomal subunit. Contacts proteins S8 and S17. May interact with IF1 in the 30S initiation complex.

Functionally, with S4 and S5 plays an important role in translational accuracy. Interacts with and stabilizes bases of the 16S rRNA that are involved in tRNA selection in the A site and with the mRNA backbone. Located at the interface of the 30S and 50S subunits, it traverses the body of the 30S subunit contacting proteins on the other side and probably holding the rRNA structure together. The combined cluster of proteins S8, S12 and S17 appears to hold together the shoulder and platform of the 30S subunit. In Polynucleobacter necessarius subsp. necessarius (strain STIR1), this protein is Small ribosomal subunit protein uS12.